The chain runs to 419 residues: Effector protein BipC (419 aa).

2 disordered regions span residues 62–94 (VAGS…GLER) and 338–402 (LQSG…AKSQ). 2 stretches are compositionally biased toward basic and acidic residues: residues 71-94 (ELAR…GLER) and 380-392 (TRDE…REAA).

The protein belongs to the SctB/SipC family.

The protein localises to the secreted. The protein is Effector protein BipC (bipC) of Burkholderia pseudomallei (strain 1710b).